The sequence spans 1384 residues: Enhancer of mRNA-decapping protein 4 (1384 aa).

4 WD repeats span residues 171-211, 227-274, 292-331, and 340-390; these read GFTG…SKIQ, NSNR…SNNS, GHAA…QDQP, and HNGQ…CLQT. Disordered regions lie at residues 471-494, 551-584, and 796-931; these read TEVL…TSES, AMSS…SPAP, and AGAA…MSTE. Polar residues predominate over residues 482–494; sequence SMTAEGNQGTSES. A compositionally biased stretch (basic and acidic residues) spans 834–844; it reads CSREEIKDRHI. 2 stretches are compositionally biased toward polar residues: residues 854–866 and 918–931; these read HLTQ…ASAE and SSQS…MSTE. Residues 930 to 1012 are a coiled coil; that stretch reads TEVQDELLQM…QQLQDQLVQQ (83 aa).

The protein belongs to the WD repeat EDC4 family.

It localises to the cytoplasm. Its subcellular location is the P-body. The protein localises to the nucleus. Its function is as follows. In the process of mRNA degradation, seems to play a role in mRNA decapping. The sequence is that of Enhancer of mRNA-decapping protein 4 (edc4) from Danio rerio (Zebrafish).